We begin with the raw amino-acid sequence, 226 residues long: PKHD-type hydroxylase PLES_48951 (226 aa).

Residues 78–178 (KVFPPLFNCY…RYASFFWTQS (101 aa)) enclose the Fe2OG dioxygenase domain. Residues His96, Asp98, and His159 each contribute to the Fe cation site. Residue Arg169 coordinates 2-oxoglutarate.

The cofactor is Fe(2+). L-ascorbate serves as cofactor.

This is PKHD-type hydroxylase PLES_48951 from Pseudomonas aeruginosa (strain LESB58).